The following is a 391-amino-acid chain: Phosphoglycerate kinase (391 aa).

Residues 21–23 (DMN), Arg-36, 59–62 (HLGR), Arg-113, and Arg-146 each bind substrate. Residues Lys-197, Glu-319, and 345-348 (GGDT) contribute to the ATP site.

Belongs to the phosphoglycerate kinase family. As to quaternary structure, monomer.

It localises to the cytoplasm. The enzyme catalyses (2R)-3-phosphoglycerate + ATP = (2R)-3-phospho-glyceroyl phosphate + ADP. It participates in carbohydrate degradation; glycolysis; pyruvate from D-glyceraldehyde 3-phosphate: step 2/5. This is Phosphoglycerate kinase from Chromobacterium violaceum (strain ATCC 12472 / DSM 30191 / JCM 1249 / CCUG 213 / NBRC 12614 / NCIMB 9131 / NCTC 9757 / MK).